Reading from the N-terminus, the 305-residue chain is MTDMHDDIPAGSRCGYVAIVGRPNVGKSTLLNHILGQKLAITSRKPQTTRHNMLGIKTEGEVQAVYVDTPGLHKSGEKALNRYMNRTASAALKDVDVVIFVVDRTRWTEEDQMVLERVQYVSCPVLIAVNKTDRIEEKADLLPHLEWLTQQLPKAEVVPISAQHGTNLDVLEKLVAERLPESEHFFPEDQITDRSSRFLAAELVREKIMRQLGAELPYQITVEIEEFKQEGRILHIHALILVEREGQKKIIIGDKGERIKSIGQNARKDMEVLFDSKVMLNLWVKVKGGWSDDERALRSLGYGDL.

The region spanning 13–181 (RCGYVAIVGR…EKLVAERLPE (169 aa)) is the Era-type G domain. The tract at residues 21-28 (GRPNVGKS) is G1. 21-28 (GRPNVGKS) serves as a coordination point for GTP. The segment at 47–51 (QTTRH) is G2. Residues 68 to 71 (DTPG) are G3. GTP is bound by residues 68-72 (DTPGL) and 130-133 (NKTD). A G4 region spans residues 130 to 133 (NKTD). Residues 160–162 (ISA) form a G5 region. A KH type-2 domain is found at 204 to 288 (VREKIMRQLG…MLNLWVKVKG (85 aa)).

It belongs to the TRAFAC class TrmE-Era-EngA-EngB-Septin-like GTPase superfamily. Era GTPase family. As to quaternary structure, monomer.

Its subcellular location is the cytoplasm. The protein resides in the cell inner membrane. An essential GTPase that binds both GDP and GTP, with rapid nucleotide exchange. Plays a role in 16S rRNA processing and 30S ribosomal subunit biogenesis and possibly also in cell cycle regulation and energy metabolism. The protein is GTPase Era of Pseudomonas aeruginosa (strain LESB58).